We begin with the raw amino-acid sequence, 244 residues long: Capsid protein (244 aa).

The Bipartite nuclear localization signal motif lies at 1–24 (MSTSKRKRADEVQWNKRSTKKKAS). The interval 1 to 38 (MSTSKRKRADEVQWNKRSTKKKASAPPVKKTGGKADRP) is disordered.

This sequence belongs to the geminiviridae capsid protein family. In terms of assembly, homomultimer. Interacts with the movement protein. Binds to single-stranded and double-stranded viral DNA.

The protein localises to the virion. The protein resides in the host nucleus. Encapsidates the viral genome into characteristic twinned ('geminate') particles. Binds the genomic viral ssDNA and shuttles it into and out of the cell nucleus. Plays a role in protection of the genome from degradation, virus acquisition and transmission by insect vectors, infectivity, and systemic movement. The CP of monopartite geminiviruses is absolutely essential for virus movement. This chain is Capsid protein, found in Maize streak virus genotype E (isolate Pat) (MSV).